Reading from the N-terminus, the 522-residue chain is Amphoterin-induced protein 2 (522 aa).

A signal peptide spans 1–39 (MSLRVHTLPTLLGAVVRPGCRELLCLLMITVAVGPGASG). The region spanning 40–68 (VCPTACICATDIVSCTNKHLSKVPGNLFR) is the LRRNT domain. Residues 40–398 (VCPTACICAT…RSHAHEAFNT (359 aa)) lie on the Extracellular side of the membrane. Cystine bridges form between Cys41/Cys47 and Cys45/Cys54. LRR repeat units follow at residues 69 to 90 (LMKRLDLSYNRIGLLDSEWIPV), 94 to 115 (KLNTLILRHNNITSISTGSFST), 118 to 139 (NLKCLDLSSNKLKTVKNAVFQE), 142 to 163 (VLEVLLLYNNHISYLDPSAFGG), 166 to 187 (QLQKLYLSGNFLTQFPMDLYVG), and 193 to 214 (ELMFLDVSYNRIPSMPMHHINL). Asn104 is a glycosylation site (N-linked (GlcNAc...) asparagine). One can recognise an LRRCT domain in the interval 228–284 (NPFVCDCSLYSLLVFWYRRHFSSVMDFKNDYTCRLWSDSRHSRQVLLLQDSFMNCSD). 2 disulfides stabilise this stretch: Cys232-Cys260 and Cys234-Cys282. N-linked (GlcNAc...) asparagine glycosylation is found at Asn281, Asn288, Asn345, Asn373, Asn381, and Asn384. Residues 289-379 (GSFRALGFIH…RLLNETVDVT (91 aa)) form the Ig-like C2-type domain. Cysteines 310 and 363 form a disulfide. Residues 399-419 (AFTTLAACVASIVLVLLYLYL) traverse the membrane as a helical segment. Residues 420 to 522 (TPCPCKCKTK…FSDTPFVAST (103 aa)) lie on the Cytoplasmic side of the membrane. Residues 501-522 (RGKSDSDSVNSVFSDTPFVAST) are disordered.

This sequence belongs to the immunoglobulin superfamily. AMIGO family. As to quaternary structure, binds itself as well as AMIGO1 and AMIGO3.

It is found in the cell membrane. The protein resides in the nucleus. Its function is as follows. Required for depolarization-dependent survival of cultured cerebellar granule neurons. May mediate homophilic as well as heterophilic cell-cell interaction with AMIGO1 or AMIGO3. May contribute to signal transduction through its intracellular domain. In Pongo abelii (Sumatran orangutan), this protein is Amphoterin-induced protein 2.